The sequence spans 452 residues: MSKKKSNSGLRFQPAGGNRTPQVPVGKKQRLDIERLAGDGRGIAFLDGRTWFVSGALAGEAVEARVLNARGKVVEARLERLLQAAPERREAPCRYYDRCGGCNLQHLPHEAQLALKQRTLAEQLQRVAGVQPEAWAAPLSGPEFGYRRRARVAVRWDVKARQLEVGFRAEASQDIIAIDDCAVLVQPLQSILRHLPTVLRSLSKPQALGHVELFSGTAEAVLVRHVAPLPAEDQARLQAFCEQANAQLWLQGEGEPAPVDPAAQLGFALAPWQLELAWRPGDFVQVNAQVNTAMIEQALAWLAPQADERVLDLFCGLGNFALPLARQAREVVAVEGVQAMVDRAAANARNNNVHNARFFQADLSQPLAGTGWAAEGFSAVLLDPPRDGAFEVVQGIARLKARRLVYVSCNPATLARDAQVLVGQGYRLKRAGILDMFPQTAHVEAMALFEAG.

The interval 1–25 (MSKKKSNSGLRFQPAGGNRTPQVPV) is disordered. The TRAM domain maps to 22 to 80 (QVPVGKKQRLDIERLAGDGRGIAFLDGRTWFVSGALAGEAVEARVLNARGKVVEARLER). [4Fe-4S] cluster contacts are provided by C93, C99, C102, and C181. S-adenosyl-L-methionine-binding residues include Q285, F314, N319, E335, D362, and D383. C409 functions as the Nucleophile in the catalytic mechanism.

Belongs to the class I-like SAM-binding methyltransferase superfamily. RNA M5U methyltransferase family. RlmD subfamily.

It carries out the reaction uridine(1939) in 23S rRNA + S-adenosyl-L-methionine = 5-methyluridine(1939) in 23S rRNA + S-adenosyl-L-homocysteine + H(+). In terms of biological role, catalyzes the formation of 5-methyl-uridine at position 1939 (m5U1939) in 23S rRNA. The sequence is that of 23S rRNA (uracil(1939)-C(5))-methyltransferase RlmD from Pseudomonas putida (strain ATCC 47054 / DSM 6125 / CFBP 8728 / NCIMB 11950 / KT2440).